Reading from the N-terminus, the 376-residue chain is Alanine racemase (376 aa).

Catalysis depends on lysine 44, which acts as the Proton acceptor; specific for D-alanine. Lysine 44 is subject to N6-(pyridoxal phosphate)lysine. Arginine 139 provides a ligand contact to substrate. The active-site Proton acceptor; specific for L-alanine is the tyrosine 271. Methionine 319 is a binding site for substrate.

This sequence belongs to the alanine racemase family. Pyridoxal 5'-phosphate is required as a cofactor.

It catalyses the reaction L-alanine = D-alanine. It functions in the pathway amino-acid biosynthesis; D-alanine biosynthesis; D-alanine from L-alanine: step 1/1. Catalyzes the interconversion of L-alanine and D-alanine. May also act on other amino acids. This Bordetella petrii (strain ATCC BAA-461 / DSM 12804 / CCUG 43448) protein is Alanine racemase (alr).